The following is a 657-amino-acid chain: Probable Xaa-Pro aminopeptidase P (657 aa).

Aspartate 453, aspartate 464, glutamate 562, and glutamate 576 together coordinate Mn(2+).

The protein belongs to the peptidase M24B family. Requires Mn(2+) as cofactor.

The catalysed reaction is Release of any N-terminal amino acid, including proline, that is linked to proline, even from a dipeptide or tripeptide.. Functionally, catalyzes the removal of a penultimate prolyl residue from the N-termini of peptides. The polypeptide is Probable Xaa-Pro aminopeptidase P (ampp) (Talaromyces stipitatus (strain ATCC 10500 / CBS 375.48 / QM 6759 / NRRL 1006) (Penicillium stipitatum)).